The chain runs to 78 residues: uncharacterized protein (78 aa).

The segment at 1–28 (MGGGNAQKSAMARAKNLEKAKAAGKGSQ) is disordered.

This is an uncharacterized protein from Arabidopsis thaliana (Mouse-ear cress).